We begin with the raw amino-acid sequence, 360 residues long: Protein Wnt-2 (360 aa).

The signal sequence occupies residues 1–25 (MNAPLGGIWPWLPLLLTWLTPEVSS). 11 disulfide bridges follow: C76–C87, C127–C135, C137–C157, C206–C220, C208–C215, C278–C309, C294–C304, C308–C348, C324–C339, C326–C336, and C331–C332. S212 is lipidated: O-palmitoleoyl serine; by PORCN. N-linked (GlcNAc...) asparagine glycosylation occurs at N295.

It belongs to the Wnt family. In terms of processing, palmitoleoylation is required for efficient binding to frizzled receptors. Depalmitoleoylation leads to Wnt signaling pathway inhibition.

The protein resides in the secreted. It localises to the extracellular space. The protein localises to the extracellular matrix. Ligand for members of the frizzled family of seven transmembrane receptors. Functions in the canonical Wnt signaling pathway that results in activation of transcription factors of the TCF/LEF family. Functions as a upstream regulator of FGF10 expression. Plays an important role in embryonic lung development. May contribute to embryonic brain development by regulating the proliferation of dopaminergic precursors and neurons. In Felis catus (Cat), this protein is Protein Wnt-2 (WNT2).